We begin with the raw amino-acid sequence, 325 residues long: Intelectin (325 aa).

An N-terminal signal peptide occupies residues 1-23; the sequence is MKYCVLLIMIHLLLVELPQFPEA. A Fibrinogen C-terminal domain is found at 44 to 266; the sequence is IRSSYIGRSC…AAMAICSGVK (223 aa). Cys-53 and Cys-82 are oxidised to a cystine. Positions 98, 99, 101, 104, 109, 110, 145, 274, 286, and 294 each coordinate Ca(2+). Intrachain disulfides connect Cys-106-Cys-292 and Cys-262-Cys-277. Residues 274 to 275 and Glu-286 each bind a carbohydrate; that span reads EH.

In terms of tissue distribution, expressed at high levels in caudal kidney, liver, and swim bladder. Also expressed in gill, spleen, intestine and head kidney. Not detected in heart.

Functionally, may be involved in innate immune surveillance. May specifically recognize carbohydrate chains of pathogens and bacterial components in a calcium-dependent manner. In vitro binds N-acetylglucosamine residues. In Oncorhynchus mykiss (Rainbow trout), this protein is Intelectin.